We begin with the raw amino-acid sequence, 101 residues long: NADH-quinone oxidoreductase subunit K (101 aa).

3 helical membrane passes run Leu-4–Leu-24, Ile-30–Phe-50, and Val-61–Leu-81.

This sequence belongs to the complex I subunit 4L family. As to quaternary structure, NDH-1 is composed of 14 different subunits. Subunits NuoA, H, J, K, L, M, N constitute the membrane sector of the complex.

It localises to the cell inner membrane. The enzyme catalyses a quinone + NADH + 5 H(+)(in) = a quinol + NAD(+) + 4 H(+)(out). In terms of biological role, NDH-1 shuttles electrons from NADH, via FMN and iron-sulfur (Fe-S) centers, to quinones in the respiratory chain. The immediate electron acceptor for the enzyme in this species is believed to be ubiquinone. Couples the redox reaction to proton translocation (for every two electrons transferred, four hydrogen ions are translocated across the cytoplasmic membrane), and thus conserves the redox energy in a proton gradient. This is NADH-quinone oxidoreductase subunit K from Methylovorus glucosotrophus (strain SIP3-4).